The following is a 361-amino-acid chain: Chorismate synthase (361 aa).

Basic and acidic residues predominate over residues 40-49 (DLQHDLDRRR). The tract at residues 40–60 (DLQHDLDRRRPGTSRHTTQRR) is disordered. Residues arginine 48 and arginine 54 each coordinate NADP(+). Residues 125–127 (RSS), 237–238 (NA), glycine 277, 292–296 (KPTSS), and arginine 318 contribute to the FMN site.

Belongs to the chorismate synthase family. In terms of assembly, homotetramer. The cofactor is FMNH2.

The enzyme catalyses 5-O-(1-carboxyvinyl)-3-phosphoshikimate = chorismate + phosphate. The protein operates within metabolic intermediate biosynthesis; chorismate biosynthesis; chorismate from D-erythrose 4-phosphate and phosphoenolpyruvate: step 7/7. Catalyzes the anti-1,4-elimination of the C-3 phosphate and the C-6 proR hydrogen from 5-enolpyruvylshikimate-3-phosphate (EPSP) to yield chorismate, which is the branch point compound that serves as the starting substrate for the three terminal pathways of aromatic amino acid biosynthesis. This reaction introduces a second double bond into the aromatic ring system. The sequence is that of Chorismate synthase from Chromohalobacter salexigens (strain ATCC BAA-138 / DSM 3043 / CIP 106854 / NCIMB 13768 / 1H11).